The chain runs to 96 residues: UPF0235 protein ECA3630 (96 aa).

This sequence belongs to the UPF0235 family.

The sequence is that of UPF0235 protein ECA3630 from Pectobacterium atrosepticum (strain SCRI 1043 / ATCC BAA-672) (Erwinia carotovora subsp. atroseptica).